The chain runs to 346 residues: Short-chain dehydrogenase/reductase bet4 (346 aa).

The segment at 1–35 (MTPAKAPSHAKKPEAGSQPISSMWTQMFPPKPTYT) is disordered. Positions 56, 80, 105, and 132 each coordinate NADP(+). S191 acts as the Proton donor in catalysis. NADP(+) is bound by residues Y222 and K226. The Proton acceptor role is filled by Y222. Residue K226 is the Lowers pKa of active site Tyr of the active site.

This sequence belongs to the short-chain dehydrogenases/reductases (SDR) family.

It catalyses the reaction dehydroprobetaenone I + AH2 = probetaenone I + A. Its pathway is mycotoxin biosynthesis. Functionally, short-chain dehydrogenase/reductase; part of the gene cluster that mediates the biosynthesis of betaenones, phytotoxic polyketides involved in leaf spot disease in sugar beets. The first step of the pathway is the synthesis of dehydroprobetaenone I by the polyketide synthase bet1 and the enoyl reductase bet3 via condensation of one acetyl-CoA starter unit with 7 malonyl-CoA units and 5 methylations. The C-terminal reductase (R) domain of bet1 catalyzes the reductive release of the polyketide chain. Because bet1 lacks a designated enoylreductase (ER) domain, the required activity is provided the enoyl reductase bet3. The short-chain dehydrogenase/reductase bet4 then catalyzes reduction of dehydroprobetaenone I to probetaenone I. The cytochrome P450 monooxygenase bet2 catalyzes successive epoxidation, oxidation (resulting from epoxide opening) and hydroxylation to install a tertiary alcohol in the decaline ring to yield betaenone C from dehydroprobetaenone I and betaenone B from probetaenone I. The FAD-linked oxidoreductase (orf1) is probably responsible for the conversion of betaenone C to betaenone A via an intramolecular aldol reaction between C-1 and C-17 to form the bridged tricyclic system in betaenone A. The chain is Short-chain dehydrogenase/reductase bet4 from Neocamarosporium betae (Beet black rot fungus).